A 76-amino-acid polypeptide reads, in one-letter code: Translational regulator CsrA (76 aa).

This sequence belongs to the CsrA/RsmA family. In terms of assembly, homodimer; the beta-strands of each monomer intercalate to form a hydrophobic core, while the alpha-helices form wings that extend away from the core.

Its subcellular location is the cytoplasm. Its function is as follows. A translational regulator that binds mRNA to regulate translation initiation and/or mRNA stability. Usually binds in the 5'-UTR at or near the Shine-Dalgarno sequence preventing ribosome-binding, thus repressing translation. Its main target seems to be the major flagellin gene, while its function is anatagonized by FliW. This is Translational regulator CsrA from Helicobacter pylori (strain P12).